The sequence spans 358 residues: Fructose-bisphosphate aldolase (358 aa).

Position 62 (Ser62) interacts with D-glyceraldehyde 3-phosphate. Asp109 serves as the catalytic Proton donor. The Zn(2+) site is built by His110, Asp144, Glu174, and His226. Residue Gly227 coordinates dihydroxyacetone phosphate. His264 provides a ligand contact to Zn(2+). Residues 265–267 (GGS) and 286–289 (NIDT) contribute to the dihydroxyacetone phosphate site.

Belongs to the class II fructose-bisphosphate aldolase family. The cofactor is Zn(2+).

The enzyme catalyses beta-D-fructose 1,6-bisphosphate = D-glyceraldehyde 3-phosphate + dihydroxyacetone phosphate. Its pathway is carbohydrate degradation; glycolysis; D-glyceraldehyde 3-phosphate and glycerone phosphate from D-glucose: step 4/4. Its function is as follows. Catalyzes the aldol condensation of dihydroxyacetone phosphate (DHAP or glycerone-phosphate) with glyceraldehyde 3-phosphate (G3P) to form fructose 1,6-bisphosphate (FBP) in gluconeogenesis and the reverse reaction in glycolysis. In Edwardsiella ictaluri (strain 93-146), this protein is Fructose-bisphosphate aldolase (fba).